The sequence spans 49 residues: Osteocalcin (49 aa).

The region spanning 1-47 is the Gla domain; the sequence is YLDHGLGAPAPYPDPLEPKREVCELNPDCDELADHIGFQEAYRRFYG. Position 9 is a hydroxyproline (P9). Residues E17, E21, E24, and D30 each coordinate Ca(2+). Residues E17, E21, and E24 each carry the 4-carboxyglutamate modification. C23 and C29 form a disulfide bridge.

This sequence belongs to the osteocalcin/matrix Gla protein family. In terms of processing, gamma-carboxyglutamic acid residues are formed by vitamin K dependent carboxylation. These residues are essential for the binding of calcium.

It is found in the secreted. In terms of biological role, the carboxylated form is one of the main organic components of the bone matrix, which constitutes 1-2% of the total bone protein: it acts as a negative regulator of bone formation and is required to limit bone formation without impairing bone resorption or mineralization. The carboxylated form binds strongly to apatite and calcium. The uncarboxylated form acts as a hormone secreted by osteoblasts, which regulates different cellular processes, such as energy metabolism, male fertility and brain development. Regulates of energy metabolism by acting as a hormone favoring pancreatic beta-cell proliferation, insulin secretion and sensitivity and energy expenditure. Uncarboxylated osteocalcin hormone also promotes testosterone production in the testes: acts as a ligand for G protein-coupled receptor GPRC6A at the surface of Leydig cells, initiating a signaling response that promotes the expression of enzymes required for testosterone synthesis in a CREB-dependent manner. Also acts as a regulator of brain development: osteocalcin hormone crosses the blood-brain barrier and acts as a ligand for GPR158 on neurons, initiating a signaling response that prevents neuronal apoptosis in the hippocampus, favors the synthesis of all monoamine neurotransmitters and inhibits that of gamma-aminobutyric acid (GABA). Osteocalcin also crosses the placenta during pregnancy and maternal osteocalcin is required for fetal brain development. This is Osteocalcin (BGLAP) from Bison priscus (Steppe wisent).